The chain runs to 675 residues: MPQVAKKLLVTCALPYANGSIHLGHMLEHIQADIWVRYQRMRGNEVHFICADDAHGTPIMLKAQQLGIKPEEMIAEMSQEHQQDFAGFGISYDNYHSTHSDENRELSNLIYGRLKENGFIKNRTISQLYDPEKGMFLPDRFVKGTCPKCKSPDQYGDNCEVCGATYSPTELIDPKSVVSGATPVLRDSEHFFFDLPSFSEMLQAWTRSGALQEQVANKMQEWFESGLQQWDISRDAPYFGFEIPDAPGKYFYVWLDAPIGYMGSFKNLCDKRGDLDFDEFWRKDSTTELYHFIGKDIVYFHSLFWPAMLEGSNFRKPTNLFVHGYVTVNGAKMSKSRGTFIKAGTYLQHLDADCLRYYYAAKLSSRIDDIDLNLEDFVQRVNADIVNKVVNLASRNAGFISKRFGGQLADKLADPALYQTFVDAAQSIAEAYASRESGRAIREIMALADLANRYVDEQAPWVVAKQEGRDADLQAICSMGINLFRVLMTYLKPVMPSLTERTEAFLNCELSWDSIQQPLLGHQVNPFKALFNRIDLDKVNEMVSASKEDMVAAKVVTGPLAEDPIQDTITFDDFAKVDMRIALITSADFVDGSDKLLKLQLDLGGETRQIFSGIRSAYPDPKALEGRLTIMVANLAPRKMRFGISEGMVMAAGPGGKEIFLLSPDSGAQPGMQVK.

The short motif at 15–25 is the 'HIGH' region element; the sequence is PYANGSIHLGH. Positions 146, 149, 159, and 162 each coordinate Zn(2+). Positions 332–336 match the 'KMSKS' region motif; it reads KMSKS. Residue Lys-335 coordinates ATP. Positions 573 to 675 constitute a tRNA-binding domain; it reads DFAKVDMRIA…SGAQPGMQVK (103 aa).

The protein belongs to the class-I aminoacyl-tRNA synthetase family. MetG type 1 subfamily. Homodimer. The cofactor is Zn(2+).

The protein localises to the cytoplasm. The catalysed reaction is tRNA(Met) + L-methionine + ATP = L-methionyl-tRNA(Met) + AMP + diphosphate. Its function is as follows. Is required not only for elongation of protein synthesis but also for the initiation of all mRNA translation through initiator tRNA(fMet) aminoacylation. The protein is Methionine--tRNA ligase of Serratia proteamaculans (strain 568).